The sequence spans 106 residues: L-rhamnose mutarotase (106 aa).

Substrate is bound at residue Tyr20. His24 functions as the Proton donor in the catalytic mechanism. Substrate is bound by residues Tyr43 and 78 to 79 (WW).

It belongs to the rhamnose mutarotase family. As to quaternary structure, homodimer.

Its subcellular location is the cytoplasm. The catalysed reaction is alpha-L-rhamnose = beta-L-rhamnose. It participates in carbohydrate metabolism; L-rhamnose metabolism. Its function is as follows. Involved in the anomeric conversion of L-rhamnose. The chain is L-rhamnose mutarotase from Rhizobium johnstonii (strain DSM 114642 / LMG 32736 / 3841) (Rhizobium leguminosarum bv. viciae).